The primary structure comprises 187 residues: UPF0301 protein Cpha266_0885 (187 aa).

The protein belongs to the UPF0301 (AlgH) family.

The polypeptide is UPF0301 protein Cpha266_0885 (Chlorobium phaeobacteroides (strain DSM 266 / SMG 266 / 2430)).